The primary structure comprises 460 residues: Probable lipase C14C8.15 (460 aa).

Over 1–16 (MTLNGNIMKYCLEKGE) the chain is Cytoplasmic. A helical; Signal-anchor for type II membrane protein transmembrane segment spans residues 17–37 (ILISFLLIALESMFRICTVIL). Residues 38–460 (PSPLRNWFYE…LVDGVMNHTI (423 aa)) are Lumenal-facing. S214 (nucleophile) is an active-site residue. An N-linked (GlcNAc...) asparagine glycan is attached at N308. Residues D382 and H408 each act as charge relay system in the active site. An N-linked (GlcNAc...) asparagine glycan is attached at N457.

Belongs to the AB hydrolase superfamily. Lipase family.

The protein localises to the golgi apparatus. The protein resides in the membrane. In terms of biological role, probable lipase. This Schizosaccharomyces pombe (strain 972 / ATCC 24843) (Fission yeast) protein is Probable lipase C14C8.15.